Consider the following 125-residue polypeptide: Barwin (125 aa).

The residue at position 1 (Q1) is a Pyrrolidone carboxylic acid. The Barwin domain maps to 1–125 (QQANDVRATY…VNYQFVDCRD (125 aa)). Cystine bridges form between C31/C63, C52/C86, and C66/C123.

Its function is as follows. May be involved in a defense mechanism. Probable plant lectin. Binds weakly a chitin analog. The sequence is that of Barwin from Hordeum vulgare (Barley).